The chain runs to 223 residues: Small ribosomal subunit protein uS3 (223 aa).

The 69-residue stretch at 38 to 106 folds into the KH type-2 domain; it reads IKKYLKSKLA…EVHLNIVEIR (69 aa).

The protein belongs to the universal ribosomal protein uS3 family. As to quaternary structure, part of the 30S ribosomal subunit. Forms a tight complex with proteins S10 and S14.

Functionally, binds the lower part of the 30S subunit head. Binds mRNA in the 70S ribosome, positioning it for translation. The sequence is that of Small ribosomal subunit protein uS3 from Rhodospirillum rubrum (strain ATCC 11170 / ATH 1.1.1 / DSM 467 / LMG 4362 / NCIMB 8255 / S1).